Reading from the N-terminus, the 135-residue chain is Large ribosomal subunit protein uL16c (135 aa).

It belongs to the universal ribosomal protein uL16 family. In terms of assembly, part of the 50S ribosomal subunit.

Its subcellular location is the plastid. It localises to the chloroplast. The protein is Large ribosomal subunit protein uL16c of Stigeoclonium helveticum (Green alga).